The primary structure comprises 314 residues: BURP domain-containing protein 8 (314 aa).

Residues 1–16 form the signal peptide; it reads MDLVRLTSLLPPSVMG. The 217-residue stretch at 98–314 folds into the BURP domain; sequence FFLEKDLFPG…PLGDMLWVRN (217 aa).

As to expression, expressed in shoot and panicles.

In Oryza sativa subsp. japonica (Rice), this protein is BURP domain-containing protein 8 (BURP8).